A 356-amino-acid chain; its full sequence is Inositol monophosphatase 3 (356 aa).

Residues 11 to 31 (LGIGVFCLLGLGVLYHVYSGF) traverse the membrane as a helical segment. Mg(2+) is bound by residues E127, D167, L169, D170, and D293. A substrate-binding site is contributed by E127. Substrate contacts are provided by residues 169 to 172 (LDAT) and D293.

Belongs to the inositol monophosphatase superfamily. Requires Mg(2+) as cofactor.

The protein localises to the membrane. It carries out the reaction a myo-inositol phosphate + H2O = myo-inositol + phosphate. It participates in polyol metabolism; myo-inositol biosynthesis; myo-inositol from D-glucose 6-phosphate: step 2/2. The polypeptide is Inositol monophosphatase 3 (bpnt2) (Xenopus tropicalis (Western clawed frog)).